Reading from the N-terminus, the 206-residue chain is 3-demethoxyubiquinol 3-hydroxylase (206 aa).

Fe cation is bound by residues Glu-55, Glu-85, His-88, Glu-137, Glu-169, and His-172.

It belongs to the COQ7 family. The cofactor is Fe cation.

It is found in the cell membrane. It carries out the reaction a 5-methoxy-2-methyl-3-(all-trans-polyprenyl)benzene-1,4-diol + AH2 + O2 = a 3-demethylubiquinol + A + H2O. Its pathway is cofactor biosynthesis; ubiquinone biosynthesis. In terms of biological role, catalyzes the hydroxylation of 2-nonaprenyl-3-methyl-6-methoxy-1,4-benzoquinol during ubiquinone biosynthesis. The chain is 3-demethoxyubiquinol 3-hydroxylase from Aromatoleum aromaticum (strain DSM 19018 / LMG 30748 / EbN1) (Azoarcus sp. (strain EbN1)).